Consider the following 251-residue polypeptide: Large ribosomal subunit protein uL4 (251 aa).

Belongs to the universal ribosomal protein uL4 family. As to quaternary structure, part of the 50S ribosomal subunit.

Its function is as follows. One of the primary rRNA binding proteins, this protein initially binds near the 5'-end of the 23S rRNA. It is important during the early stages of 50S assembly. It makes multiple contacts with different domains of the 23S rRNA in the assembled 50S subunit and ribosome. Forms part of the polypeptide exit tunnel. The chain is Large ribosomal subunit protein uL4 from Methanothrix thermoacetophila (strain DSM 6194 / JCM 14653 / NBRC 101360 / PT) (Methanosaeta thermophila).